We begin with the raw amino-acid sequence, 159 residues long: Phosphopantetheine adenylyltransferase (159 aa).

A substrate-binding site is contributed by threonine 10. ATP-binding positions include threonine 10–phenylalanine 11 and histidine 18. The substrate site is built by lysine 42, leucine 74, and arginine 88. ATP-binding positions include glycine 89–arginine 91, glutamate 99, and phenylalanine 124–serine 130.

This sequence belongs to the bacterial CoaD family. In terms of assembly, homohexamer. Requires Mg(2+) as cofactor.

The protein localises to the cytoplasm. It carries out the reaction (R)-4'-phosphopantetheine + ATP + H(+) = 3'-dephospho-CoA + diphosphate. It participates in cofactor biosynthesis; coenzyme A biosynthesis; CoA from (R)-pantothenate: step 4/5. Functionally, reversibly transfers an adenylyl group from ATP to 4'-phosphopantetheine, yielding dephospho-CoA (dPCoA) and pyrophosphate. The protein is Phosphopantetheine adenylyltransferase of Thioalkalivibrio sulfidiphilus (strain HL-EbGR7).